Reading from the N-terminus, the 110-residue chain is Snake venom vascular endothelial growth factor toxin HF (110 aa).

Pyrrolidone carboxylic acid is present on glutamine 1. Cystine bridges form between cysteine 14–cysteine 56, cysteine 45–cysteine 91, and cysteine 49–cysteine 93.

The protein belongs to the PDGF/VEGF growth factor family. Snake venom VEGF subfamily. As to quaternary structure, homodimer; disulfide-linked. Interacts with VEGF receptor-2 (KDR) with high affinity. As to expression, expressed by the venom gland.

The protein localises to the secreted. In terms of biological role, snake venom VEGFs that may contribute to venom dispersion and prey subjugation by inducing vascular permeability and hypotension. This protein induces an increase in capillary permeability after intradermal injection, as well as a drastic hypotensive effect after intravenous injection. The hypotension is mediated by nitric oxide (NO), which is produced by VEGF-activated endothelium NO synthase. Also induces angiogenesis in vitro, probably through VEGF receptor (KDR/VEGFR-2) signaling. This Vipera aspis aspis (Aspic viper) protein is Snake venom vascular endothelial growth factor toxin HF.